The chain runs to 130 residues: Small ribosomal subunit protein uS9 (130 aa).

It belongs to the universal ribosomal protein uS9 family.

The protein is Small ribosomal subunit protein uS9 of Vibrio atlanticus (strain LGP32) (Vibrio splendidus (strain Mel32)).